The primary structure comprises 494 residues: Ketol-acid reductoisomerase (NADP(+)) (494 aa).

One can recognise a KARI N-terminal Rossmann domain in the interval 14–208 (LDQLGRCRFM…GGHRAGCLES (195 aa)). NADP(+) contacts are provided by residues 45–48 (CGAQ), R68, R76, S78, and 108–110 (DKQ). H132 is an active-site residue. Residue G158 participates in NADP(+) binding. 2 KARI C-terminal knotted domains span residues 209 to 344 (SFVA…NYPE) and 345 to 487 (SDVE…MSDM). 4 residues coordinate Mg(2+): D217, E221, E389, and E393. S414 lines the substrate pocket.

This sequence belongs to the ketol-acid reductoisomerase family. Requires Mg(2+) as cofactor.

The enzyme catalyses (2R)-2,3-dihydroxy-3-methylbutanoate + NADP(+) = (2S)-2-acetolactate + NADPH + H(+). It catalyses the reaction (2R,3R)-2,3-dihydroxy-3-methylpentanoate + NADP(+) = (S)-2-ethyl-2-hydroxy-3-oxobutanoate + NADPH + H(+). The protein operates within amino-acid biosynthesis; L-isoleucine biosynthesis; L-isoleucine from 2-oxobutanoate: step 2/4. Its pathway is amino-acid biosynthesis; L-valine biosynthesis; L-valine from pyruvate: step 2/4. Functionally, involved in the biosynthesis of branched-chain amino acids (BCAA). Catalyzes an alkyl-migration followed by a ketol-acid reduction of (S)-2-acetolactate (S2AL) to yield (R)-2,3-dihydroxy-isovalerate. In the isomerase reaction, S2AL is rearranged via a Mg-dependent methyl migration to produce 3-hydroxy-3-methyl-2-ketobutyrate (HMKB). In the reductase reaction, this 2-ketoacid undergoes a metal-dependent reduction by NADPH to yield (R)-2,3-dihydroxy-isovalerate. This chain is Ketol-acid reductoisomerase (NADP(+)), found in Aliivibrio fischeri (strain ATCC 700601 / ES114) (Vibrio fischeri).